We begin with the raw amino-acid sequence, 274 residues long: 2,3,4,5-tetrahydropyridine-2,6-dicarboxylate N-succinyltransferase (274 aa).

This sequence belongs to the transferase hexapeptide repeat family.

It is found in the cytoplasm. The enzyme catalyses (S)-2,3,4,5-tetrahydrodipicolinate + succinyl-CoA + H2O = (S)-2-succinylamino-6-oxoheptanedioate + CoA. The protein operates within amino-acid biosynthesis; L-lysine biosynthesis via DAP pathway; LL-2,6-diaminopimelate from (S)-tetrahydrodipicolinate (succinylase route): step 1/3. The polypeptide is 2,3,4,5-tetrahydropyridine-2,6-dicarboxylate N-succinyltransferase (Klebsiella pneumoniae (strain 342)).